We begin with the raw amino-acid sequence, 256 residues long: ATP synthase peripheral stalk subunit b, mitochondrial (256 aa).

A mitochondrion-targeting transit peptide spans 1-42; sequence MLSRVVLSAAAAAAPSLKNAALLGPGVLQATRIFHTGQPSLA. Position 131 is an N6-succinyllysine (K131). An N6-acetyllysine mark is found at K139, K154, K162, K221, K233, and K244.

This sequence belongs to the eukaryotic ATPase B chain family. As to quaternary structure, component of the ATP synthase complex composed at least of ATP5F1A/subunit alpha, ATP5F1B/subunit beta, ATP5MC1/subunit c (homooctomer), MT-ATP6/subunit a, MT-ATP8/subunit 8, ATP5ME/subunit e, ATP5MF/subunit f, ATP5MG/subunit g, ATP5MK/subunit k, ATP5MJ/subunit j, ATP5F1C/subunit gamma, ATP5F1D/subunit delta, ATP5F1E/subunit epsilon, ATP5PF/subunit F6, ATP5PB/subunit b, ATP5PD/subunit d, ATP5PO/subunit OSCP. ATP synthase complex consists of a soluble F(1) head domain (subunits alpha(3) and beta(3)) - the catalytic core - and a membrane F(0) domain - the membrane proton channel (subunits c, a, 8, e, f, g, k and j). These two domains are linked by a central stalk (subunits gamma, delta, and epsilon) rotating inside the F1 region and a stationary peripheral stalk (subunits F6, b, d, and OSCP).

Its subcellular location is the mitochondrion. It localises to the mitochondrion inner membrane. In terms of biological role, subunit b, of the mitochondrial membrane ATP synthase complex (F(1)F(0) ATP synthase or Complex V) that produces ATP from ADP in the presence of a proton gradient across the membrane which is generated by electron transport complexes of the respiratory chain. ATP synthase complex consist of a soluble F(1) head domain - the catalytic core - and a membrane F(1) domain - the membrane proton channel. These two domains are linked by a central stalk rotating inside the F(1) region and a stationary peripheral stalk. During catalysis, ATP synthesis in the catalytic domain of F(1) is coupled via a rotary mechanism of the central stalk subunits to proton translocation. In vivo, can only synthesize ATP although its ATP hydrolase activity can be activated artificially in vitro. Part of the complex F(0) domain. Part of the complex F(0) domain and the peripheric stalk, which acts as a stator to hold the catalytic alpha(3)beta(3) subcomplex and subunit a/ATP6 static relative to the rotary elements. In Bos taurus (Bovine), this protein is ATP synthase peripheral stalk subunit b, mitochondrial.